The chain runs to 334 residues: Serpentine receptor class alpha-11 (334 aa).

The Extracellular portion of the chain corresponds to 1–23 (MTTNNPVCASDAHMEMYSSKLYT). Residues 24–44 (SALFLNLIIATTSMILTGFAI) form a helical membrane-spanning segment. The Cytoplasmic segment spans residues 45 to 57 (QKLFMESIINIST). A helical transmembrane segment spans residues 58-80 (RMFLFCGLMCCSLHQTAYIVLRI). The Extracellular segment spans residues 81–105 (QVIYQVFFKLSEPCNLYYPAIDCKY). A helical membrane pass occupies residues 106-126 (VTFSLVAGNTGMIFIQSAMTI). At 127–145 (DRIFATIFPKLWPKLKYWP) the chain is on the cytoplasmic side. The helical transmembrane segment at 146–166 (GVVLSILMIACNYANVQIIFW) threads the bilayer. At 167–191 (GDPLTEYVPTCGQFPSKSVNRFQTF) the chain is on the extracellular side. Residues 192 to 212 (LAIALYMSIAHMVINVIILYI) form a helical membrane-spanning segment. Residues 213 to 239 (NVLQDRQQSKSFNVNQRYQSREALKSS) are Cytoplasmic-facing. A helical transmembrane segment spans residues 240–260 (QAIFFLSMSQFFACLIYSVFT). Residues 261 to 277 (KVFLEFQLNLSPLQSGL) lie on the Extracellular side of the membrane. The helical transmembrane segment at 278-298 (VLALSYTTPYACIAIPSLIIF) threads the bilayer. Residues 299 to 334 (TFRFIKNQRLRNINELRSQTETGDECMRKIAKIWEK) are Cytoplasmic-facing.

It belongs to the nematode receptor-like protein sra family. Expressed in interneurons AIY and AVB in L1 larvae. In adults, strong expression is seen in AIY and AIA but only weak expression in AVB.

The protein resides in the membrane. In terms of biological role, a G protein-coupled receptor required for olfactory imprinting a requisite in ordorant response such as benzaldehyde and isoamylalcohol. This is Serpentine receptor class alpha-11 (sra-11) from Caenorhabditis elegans.